Here is a 98-residue protein sequence, read N- to C-terminus: MFEQRVNSDVLTVSTVNSQDQVTQKPLRDSVKQALKNYFAQLNGQDVNDLYELVLAEVEQPLLDMVMQYTRGNQTRAALMMGINRGTLRKKLKKYGMN.

A DNA-binding region (H-T-H motif) is located at residues 74–93; sequence QTRAALMMGINRGTLRKKLK.

Belongs to the transcriptional regulatory Fis family. In terms of assembly, homodimer.

In terms of biological role, activates ribosomal RNA transcription. Plays a direct role in upstream activation of rRNA promoters. This is DNA-binding protein Fis from Citrobacter koseri (strain ATCC BAA-895 / CDC 4225-83 / SGSC4696).